A 954-amino-acid chain; its full sequence is Centrosomal protein of 112 kDa (954 aa).

Positions 276-954 (QKHDAEVQKI…EELTTYQSRR (679 aa)) form a coiled coil.

The protein localises to the cytoplasm. It localises to the cytoskeleton. Its subcellular location is the microtubule organizing center. It is found in the centrosome. This Mus musculus (Mouse) protein is Centrosomal protein of 112 kDa (Cep112).